Consider the following 297-residue polypeptide: MEPRALVTALSLGLSLCSLGLLVTAIFTDHWYETDPRRHKESCERSRAGADPPDQKNRLMPLSHLPLRDSPPLGRRLLPGGPGRADPESWRSLLGLGGLDAECGRPLFATYSGLWRKCYFLGIDRDIDTLILKGIAQRCTAIKYHFSQPIRLRNIPFNLTKTIQQDEWHLLHLRRITAGFLGMAVAVLLCGCIVATVSFFWEESLTQHVAGLLFLMTGIFCTISLCTYAASISYDLNRLPKLIYSLPADVEHGYSWSIFCAWCSLGFIVAAGGLCIAYPFISRTKIAQLKSGRDSTV.

A signal peptide spans Met-1–Ala-25. Topologically, residues Ile-26 to Gly-179 are extracellular. Over residues Glu-41–Asn-57 the composition is skewed to basic and acidic residues. Residues Glu-41 to Arg-84 are disordered. The segment covering Arg-68–Pro-79 has biased composition (low complexity). The N-linked (GlcNAc...) asparagine glycan is linked to Asn-158. The chain crosses the membrane as a helical span at residues Phe-180–Phe-200. At Trp-201–His-208 the chain is on the cytoplasmic side. A helical membrane pass occupies residues Val-209–Ala-229. The Extracellular portion of the chain corresponds to Ala-230–Ser-257. Residues Ile-258 to Tyr-278 traverse the membrane as a helical segment. Topologically, residues Pro-279–Val-297 are cytoplasmic.

Belongs to the TMEM178 family. In terms of assembly, interacts with STIM1.

The protein resides in the endoplasmic reticulum membrane. Its function is as follows. Acts as a negative regulator of osteoclast differentiation in basal and inflammatory conditions by regulating TNFSF11-induced Ca (2+) fluxes, thereby controlling the induction of NFATC1. This Homo sapiens (Human) protein is Transmembrane protein 178A (TMEM178A).